The following is a 132-amino-acid chain: uncharacterized protein (132 aa).

Residues 105 to 125 form a helical membrane-spanning segment; sequence VHGYVVFWLSILCILIIIFVY.

It is found in the membrane. This is an uncharacterized protein from Methanocaldococcus jannaschii (strain ATCC 43067 / DSM 2661 / JAL-1 / JCM 10045 / NBRC 100440) (Methanococcus jannaschii).